Reading from the N-terminus, the 148-residue chain is Large ribosomal subunit protein uL16 (148 aa).

The protein belongs to the universal ribosomal protein uL16 family. In terms of assembly, part of the 50S ribosomal subunit.

In terms of biological role, binds 23S rRNA and is also seen to make contacts with the A and possibly P site tRNAs. In Gloeobacter violaceus (strain ATCC 29082 / PCC 7421), this protein is Large ribosomal subunit protein uL16.